Reading from the N-terminus, the 738-residue chain is Melanotransferrin (738 aa).

An N-terminal signal peptide occupies residues M1–G19. The interval G20–D30 is antigenic epitope. 2 consecutive Transferrin-like domains span residues V23–C357 and L366–S706. Cystine bridges form between C26–C63 and C36–C54. N38 carries an N-linked (GlcNAc...) asparagine glycan. Fe(3+) contacts are provided by D78 and Y107. Cystine bridges form between C130–C216, C172–C189, C186–C199, and C257–C271. A hydrogencarbonate-binding site is contributed by T132. Residue N135 is glycosylated (N-linked (GlcNAc...) asparagine). Positions 136, 138, and 139 each coordinate hydrogencarbonate. Position 210 (Y210) interacts with Fe(3+). Fe(3+)-binding residues include H279, S421, and Y451. S462 is subject to Phosphoserine; by FAM20C. N515 carries N-linked (GlcNAc...) asparagine glycosylation. Fe(3+)-binding residues include Y556 and H625. C709 carries GPI-anchor amidated cysteine lipidation. Residues S710–L738 constitute a propeptide, removed in mature form.

This sequence belongs to the transferrin family. In terms of tissue distribution, found predominantly in human melanomas and in certain fetal tissues; also found in liver, epithelium, umbilical chord, placenta and sweat gland ducts.

The protein localises to the cell membrane. Involved in iron cellular uptake. Seems to be internalized and then recycled back to the cell membrane. Binds a single atom of iron per subunit. Could also bind zinc. In Homo sapiens (Human), this protein is Melanotransferrin.